The following is an 81-amino-acid chain: ATP synthase subunit C, plastid (81 aa).

2 helical membrane-spanning segments follow: residues Pro3–Gly23 and Leu57–Ala77.

This sequence belongs to the ATPase C chain family. In terms of assembly, F-type ATPases have 2 components, F(1) - the catalytic core - and F(0) - the membrane proton channel. F(1) has five subunits: alpha(3), beta(3), gamma(1), delta(1), epsilon(1). F(0) has four main subunits: a(1), b(1), b'(1) and c(10-14). The alpha and beta chains form an alternating ring which encloses part of the gamma chain. F(1) is attached to F(0) by a central stalk formed by the gamma and epsilon chains, while a peripheral stalk is formed by the delta, b and b' chains.

Its subcellular location is the plastid membrane. Functionally, f(1)F(0) ATP synthase produces ATP from ADP in the presence of a proton or sodium gradient. F-type ATPases consist of two structural domains, F(1) containing the extramembraneous catalytic core and F(0) containing the membrane proton channel, linked together by a central stalk and a peripheral stalk. During catalysis, ATP synthesis in the catalytic domain of F(1) is coupled via a rotary mechanism of the central stalk subunits to proton translocation. Key component of the F(0) channel; it plays a direct role in translocation across the membrane. A homomeric c-ring of between 10-14 subunits forms the central stalk rotor element with the F(1) delta and epsilon subunits. This chain is ATP synthase subunit C, plastid, found in Cuscuta gronovii (Common dodder).